The primary structure comprises 287 residues: MAAKILDGKAIAQKVRDEVREGVARFVAAHGRPPGLEVVLVGEDPASVTHTRSKERMSNEVGIRGRLRALPAATTEAELLACVAELDADDTVDGILVQLPLPARIRAHAVLDAIDPAKDVDGLHPVNAGLLAMGRPGGIAPCTPVGCMRLLAEAGVELAGARAVVVGRSNLVGRPMAQLLLARHATVAIAHTRTRDLKALCREADVLVVAAGKAKLIGGDWIKEGATVIDVGMNRDDAGKLVGDVDFDAVRERAAWITPVPGGVGPMTIASLLETTLRAAEARVAKR.

NADP(+) contacts are provided by residues 167–169 (GRS) and threonine 192.

Belongs to the tetrahydrofolate dehydrogenase/cyclohydrolase family. In terms of assembly, homodimer.

It carries out the reaction (6R)-5,10-methylene-5,6,7,8-tetrahydrofolate + NADP(+) = (6R)-5,10-methenyltetrahydrofolate + NADPH. The enzyme catalyses (6R)-5,10-methenyltetrahydrofolate + H2O = (6R)-10-formyltetrahydrofolate + H(+). Its pathway is one-carbon metabolism; tetrahydrofolate interconversion. Its function is as follows. Catalyzes the oxidation of 5,10-methylenetetrahydrofolate to 5,10-methenyltetrahydrofolate and then the hydrolysis of 5,10-methenyltetrahydrofolate to 10-formyltetrahydrofolate. This is Bifunctional protein FolD from Sorangium cellulosum (strain So ce56) (Polyangium cellulosum (strain So ce56)).